Here is a 129-residue protein sequence, read N- to C-terminus: uncharacterized protein (129 aa).

This is an uncharacterized protein from Oryza sativa subsp. indica (Rice).